A 956-amino-acid polypeptide reads, in one-letter code: GAS2-like protein 2B (956 aa).

The Calponin-homology (CH) domain occupies 23–150; the sequence is YAMKEDLAEW…CLLELARRAS (128 aa). Residues 191-263 form the GAR domain; sequence CDFKNLDQMV…HYLDKHDPCH (73 aa). Composition is skewed to polar residues over residues 332–353 and 381–390; these read SSSY…QTPP and DPQQLGNPQS. Disordered regions lie at residues 332–361, 378–406, 853–885, and 914–956; these read SSSY…SMSI, DTQD…ASQL, RPKI…SRNN, and VNSE…ESWV. Positions 859–868 are enriched in basic and acidic residues; that stretch reads RRDNRPEKKP.

This sequence belongs to the GAS2 family.

It is found in the cytoplasm. Its subcellular location is the cytoskeleton. It localises to the cilium basal body. Together with gas2l2.L, regulates ciliary orientation and performance. This chain is GAS2-like protein 2B, found in Xenopus laevis (African clawed frog).